Reading from the N-terminus, the 598-residue chain is Elongation factor 4 (598 aa).

Residues 2–184 (KNIRNFSIIA…EIVRKIPAPE (183 aa)) enclose the tr-type G domain. GTP is bound by residues 14–19 (DHGKST) and 131–134 (NKID).

It belongs to the TRAFAC class translation factor GTPase superfamily. Classic translation factor GTPase family. LepA subfamily.

The protein resides in the cell inner membrane. It carries out the reaction GTP + H2O = GDP + phosphate + H(+). Its function is as follows. Required for accurate and efficient protein synthesis under certain stress conditions. May act as a fidelity factor of the translation reaction, by catalyzing a one-codon backward translocation of tRNAs on improperly translocated ribosomes. Back-translocation proceeds from a post-translocation (POST) complex to a pre-translocation (PRE) complex, thus giving elongation factor G a second chance to translocate the tRNAs correctly. Binds to ribosomes in a GTP-dependent manner. This Histophilus somni (strain 2336) (Haemophilus somnus) protein is Elongation factor 4.